An 895-amino-acid polypeptide reads, in one-letter code: uncharacterized protein (895 aa).

The segment at 257-283 is disordered; it reads KSHKYPPGPPDNSSSNTSGQQNTSNTS. Positions 268-283 are enriched in low complexity; the sequence is NSSSNTSGQQNTSNTS.

This is an uncharacterized protein from Acanthamoeba polyphaga mimivirus (APMV).